We begin with the raw amino-acid sequence, 305 residues long: Dihydroorotate dehydrogenase B (NAD(+)), catalytic subunit (305 aa).

Residues Ser-23 and 47-48 (KG) contribute to the FMN site. Substrate contacts are provided by residues Lys-47 and 71–75 (NAIGL). The FMN site is built by Asn-101 and Asn-129. Asn-129 lines the substrate pocket. Cys-132 (nucleophile) is an active-site residue. FMN contacts are provided by Lys-167 and Ile-193. Substrate is bound at residue 194–195 (NT). FMN contacts are provided by residues Gly-219, 245–246 (GG), and 267–268 (GT).

The protein belongs to the dihydroorotate dehydrogenase family. Type 1 subfamily. In terms of assembly, heterotetramer of 2 PyrK and 2 PyrD type B subunits. FMN serves as cofactor.

The protein resides in the cytoplasm. The enzyme catalyses (S)-dihydroorotate + NAD(+) = orotate + NADH + H(+). It functions in the pathway pyrimidine metabolism; UMP biosynthesis via de novo pathway; orotate from (S)-dihydroorotate (NAD(+) route): step 1/1. Catalyzes the conversion of dihydroorotate to orotate with NAD(+) as electron acceptor. The polypeptide is Dihydroorotate dehydrogenase B (NAD(+)), catalytic subunit (pyrD) (Geotalea uraniireducens (strain Rf4) (Geobacter uraniireducens)).